A 476-amino-acid polypeptide reads, in one-letter code: Small ribosomal subunit protein mS29 (476 aa).

Residues 1–54 constitute a mitochondrion transit peptide; sequence MLPKFRSRSSIIKNTERISNILSGGKLTVCGSKLGGLYTFEKCTFNKYYSSSQY. The segment at 58–97 is disordered; the sequence is GRPVGGNIHSSSNQQRQKNSEAPRINEIPPSTSSVEKSTT. Composition is skewed to polar residues over residues 65-74 and 86-97; these read IHSSSNQQRQ and PPSTSSVEKSTT. Residue 200 to 207 participates in ATP binding; the sequence is GAPGSGRS.

It belongs to the mitochondrion-specific ribosomal protein mS29 family. Component of the mitochondrial small ribosomal subunit (mt-SSU). Mature yeast 74S mitochondrial ribosomes consist of a small (37S) and a large (54S) subunit. The 37S small subunit contains a 15S ribosomal RNA (15S mt-rRNA) and at least 32 different proteins. The 54S large subunit contains a 21S rRNA (21S mt-rRNA) and at least 45 different proteins.

It localises to the mitochondrion. Its function is as follows. Component of the mitochondrial ribosome (mitoribosome), a dedicated translation machinery responsible for the synthesis of mitochondrial genome-encoded proteins, including at least some of the essential transmembrane subunits of the mitochondrial respiratory chain. The mitoribosomes are attached to the mitochondrial inner membrane and translation products are cotranslationally integrated into the membrane. mS29 binds GTP and is probably an active GTPase. GTP hydrolysis may be linked to subunit association. mS29 also has an extraribosomal function, being required for maintenance of mitochondrial DNA. The polypeptide is Small ribosomal subunit protein mS29 (rsm23) (Schizosaccharomyces pombe (strain 972 / ATCC 24843) (Fission yeast)).